The primary structure comprises 70 residues: DNA gyrase inhibitor YacG (70 aa).

The Zn(2+) site is built by cysteine 21, cysteine 24, cysteine 36, and cysteine 40.

This sequence belongs to the DNA gyrase inhibitor YacG family. As to quaternary structure, interacts with GyrB. It depends on Zn(2+) as a cofactor.

Its function is as follows. Inhibits all the catalytic activities of DNA gyrase by preventing its interaction with DNA. Acts by binding directly to the C-terminal domain of GyrB, which probably disrupts DNA binding by the gyrase. The sequence is that of DNA gyrase inhibitor YacG from Sinorhizobium medicae (strain WSM419) (Ensifer medicae).